Reading from the N-terminus, the 2032-residue chain is Cytoskeleton-associated protein 5 (2032 aa).

2 TOG regions span residues 1–223 (MGDD…KLPT) and 268–502 (YELL…LIHG). Position 48 is an N6-acetyllysine (Lys48). HEAT repeat units lie at residues 159-197 (IILL…WIRD), 356-394 (GQYA…TTTL), and 434-472 (KSLL…VVGE). The interval 516 to 579 (PLPGRTAASG…GTKNKKGLET (64 aa)) is disordered. Residues 543 to 554 (LKKAPAAKAGGP) are compositionally biased toward low complexity. A TOG 3 region spans residues 588 to 817 (SIEVCEEKAS…EFEKMQGQSP (230 aa)). The stretch at 750-788 (GLNVKAFISNVKTALAATNPAVRTAAITLLGVMYLYVGP) is one HEAT 4 repeat. A disordered region spans residues 811–851 (KMQGQSPPAPTRGISKHSTSGTDEGEDGDEPDDGSNDVVDL). Residues Ser816 and Ser845 each carry the phosphoserine modification. A compositionally biased stretch (acidic residues) spans 833 to 845 (DEGEDGDEPDDGS). TOG regions lie at residues 853–1081 (PRTE…VNMP) and 1193–1428 (IEQL…KRPS). 3 HEAT repeats span residues 855-893 (TEIS…DAKF), 936-974 (KQHV…QTGM), and 1013-1051 (PTDL…HLGY). The disordered stretch occupies residues 1077–1160 (KVNMPAKPAP…KEDEDKSGPI (84 aa)). HEAT repeat units lie at residues 1284–1322 (ENEA…VYPA), 1324–1357 (KMFP…SYGM), and 1361–1399 (QPTP…VHGD). The interval 1422-1443 (RSAKRPSAAPIKQVEEKPQRAQ) is disordered. Ser1469 carries the post-translational modification Phosphoserine. The disordered stretch occupies residues 1801-1822 (SMDQTGSKSDKETEKGASRIDE). Basic and acidic residues predominate over residues 1808-1822 (KSDKETEKGASRIDE). Residue Ser1861 is modified to Phosphoserine. Residues 1932–1957 (PSVYLERLKILRQRCGLDNTKQDDRP) are interaction with TACC3. Residues 1949 to 2032 (DNTKQDDRPP…RLERIKSSRK (84 aa)) are disordered. Residues 1971 to 1983 (VASSTDMLHSKLS) show a composition bias toward polar residues. Over residues 1984–1997 (QLRESREQHQHSDL) the composition is skewed to basic and acidic residues. Residues 2002 to 2014 (THSSGTVTSSSST) show a composition bias toward low complexity. Positions 2018 to 2032 (DDLKKRLERIKSSRK) are enriched in basic and acidic residues.

This sequence belongs to the TOG/XMAP215 family. Interacts with TACC1. Interacts with SLAIN2 and SLAIN1. Interacts with HNRNPA2B1. Interacts with TACC3 independently of clathrin. Interacts with TACC3 and clathrin forming the TACC3/ch-TOG/clathrin complex located at spindle inter-microtubules bridges. Interacts with NDC80; indicative for an association with the NDC80 complex. As to expression, overexpressed in hepatomas and colonic tumors. Also expressed in skeletal muscle, brain, heart, placenta, lung, liver, kidney and pancreas. Expression is elevated in the brain; highly expressed in the Purkinje cell bodies of the cerebellum.

The protein localises to the cytoplasm. It is found in the cytoskeleton. Its subcellular location is the microtubule organizing center. It localises to the centrosome. The protein resides in the spindle pole. The protein localises to the spindle. It is found in the chromosome. Its subcellular location is the centromere. It localises to the kinetochore. In terms of biological role, binds to the plus end of microtubules and regulates microtubule dynamics and microtubule organization. Acts as a processive microtubule polymerase. Promotes cytoplasmic microtubule nucleation and elongation. Plays a major role in organizing spindle poles. In spindle formation protects kinetochore microtubules from depolymerization by KIF2C and has an essential role in centrosomal microtubule assembly independently of KIF2C activity. Contributes to centrosome integrity. Acts as a component of the TACC3/ch-TOG/clathrin complex proposed to contribute to stabilization of kinetochore fibers of the mitotic spindle by acting as inter-microtubule bridge. The TACC3/ch-TOG/clathrin complex is required for the maintenance of kinetochore fiber tension. Enhances the strength of NDC80 complex-mediated kinetochore-tip microtubule attachments. This Homo sapiens (Human) protein is Cytoskeleton-associated protein 5 (CKAP5).